The sequence spans 581 residues: Leucine-rich repeat-containing protein 47 (581 aa).

LRR repeat units lie at residues 78-97 (QLHSLVLRRNALGPGLSPEL), 102-123 (ALRVLDLSGNALETLPPGEGLG), 132-154 (QLQSLNLSGNRLRELPADLARCA), 156-177 (RLQSLNLTGNRLDAFPPELFRP), 182-204 (LLSELAAADNCLRELSPDIAHLA), 205-227 (SLKTLDLSNNQLTEIPAELADCP), and 228-248 (KLKEINFRGNRLRDKRLEKMV). The disordered stretch occupies residues 262-301 (AGGRGGRSKGRQEASEKEDRKKRRERKQHRESGEGEEEVA). Over residues 271–280 (GRQEASEKED) the composition is skewed to basic and acidic residues. A phosphoserine mark is found at Ser-314, Ser-430, and Ser-519. Positions 401–436 (LGRKEAKAKELVRQLQLEAEEQRKQKKRQSVSGLHR) form a coiled coil.

The sequence is that of Leucine-rich repeat-containing protein 47 (Lrrc47) from Mus musculus (Mouse).